The sequence spans 105 residues: Nitrogenase-stabilizing/protective protein NifW 1 (105 aa).

It belongs to the NifW family. In terms of assembly, homotrimer; associates with NifD.

Its function is as follows. May protect the nitrogenase Fe-Mo protein from oxidative damage. This chain is Nitrogenase-stabilizing/protective protein NifW 1, found in Trichormus variabilis (strain ATCC 29413 / PCC 7937) (Anabaena variabilis).